A 214-amino-acid polypeptide reads, in one-letter code: MSRLIIVFIVVTMICAATALSSKKSINEDEKDEKRSVAVAGAVIEGATLTFNVLQTVLKALGDISRKIAVGIDNESGMTWTAMNTYFRSGTSDVILPHTVPHGKALLYNGQKDRGPVATGVVGVLAYAMSDGNTLAVLFSIPFDYNLYSNWWNVKVYKGHRRADQRMYEELYYNLSPFRGDNGWHNRDLGYGLKGRGFMNSSGQSILEIHVTKA.

The first 19 residues, 1–19 (MSRLIIVFIVVTMICAATA), serve as a signal peptide directing secretion. A propeptide spanning residues 20-35 (LSSKKSINEDEKDEKR) is cleaved from the precursor. The tract at residues 38–47 (AVAGAVIEGA) is plays an important role in the hemolytic activity. The tract at residues 46–65 (GATLTFNVLQTVLKALGDIS) is N-terminal region. Residues Ser-89, Val-122, Ser-140, Pro-142, Tyr-168, Tyr-172, and Tyr-173 each coordinate phosphocholine. Residues 140-155 (SIPFDYNLYSNWWNVK) form a trp-rich region, which is important for the binding to lipid membrane region. Residues 179–181 (RGD) carry the Cell attachment site, crucial for protein stability motif.

It belongs to the actinoporin family. Sea anemone subfamily. As to quaternary structure, octamer or nonamer in membranes. Monomer in the soluble state.

It localises to the secreted. The protein resides in the nematocyst. It is found in the target cell membrane. Pore-forming protein that forms cations-selective hydrophilic pores of around 1 nm and causes cytolysis. Pore formation is a multi-step process that involves specific recognition of membrane sphingomyelin (but neither cholesterol nor phosphatidylcholine) using aromatic rich region and adjacent phosphocholine (POC) binding site, firm binding to the membrane (mainly driven by hydrophobic interactions) accompanied by the transfer of the N-terminal region to the lipid-water interface and finally pore formation after oligomerization of monomers. The sequence is that of DELTA-actitoxin-Aeq1b from Actinia equina (Beadlet anemone).